Consider the following 157-residue polypeptide: Mitochondrial inner membrane protease subunit 1 (157 aa).

Residues Ser-35 and Lys-80 contribute to the active site.

Belongs to the peptidase S26 family. IMP1 subfamily. Heterodimer of 2 subunits, imp1 and imp2.

It is found in the mitochondrion inner membrane. Its function is as follows. Catalyzes the removal of transit peptides required for the targeting of proteins from the mitochondrial matrix, across the inner membrane, into the inter-membrane space. The polypeptide is Mitochondrial inner membrane protease subunit 1 (imp1) (Schizosaccharomyces pombe (strain 972 / ATCC 24843) (Fission yeast)).